The sequence spans 172 residues: Small ribosomal subunit protein uS5 (172 aa).

One can recognise an S5 DRBM domain in the interval 16–79; sequence LKEKLVHINR…EDGKKNVIKV (64 aa).

The protein belongs to the universal ribosomal protein uS5 family. Part of the 30S ribosomal subunit. Contacts proteins S4 and S8.

In terms of biological role, with S4 and S12 plays an important role in translational accuracy. Its function is as follows. Located at the back of the 30S subunit body where it stabilizes the conformation of the head with respect to the body. The sequence is that of Small ribosomal subunit protein uS5 from Chlorobium phaeobacteroides (strain DSM 266 / SMG 266 / 2430).